A 608-amino-acid chain; its full sequence is Sensor protein kinase WalK (608 aa).

2 consecutive transmembrane segments (helical) span residues 14–34 (LVIVYVLLIIIGMQIIGLYFT) and 182–202 (IFIIGTAISLFITVILGFFIA). Residues 203 to 255 (RTITRPITDMRNQTVEMSKGNYTQRVKIYGNDEIGELALAFNNLSKRVQEAQA) form the HAMP domain. In terms of domain architecture, PAS spans 260 to 330 (EKRRLDSVIT…EIQENNDSFL (71 aa)). In terms of domain architecture, PAC spans 324 to 377 (ENNDSFLLDINEDEGIIARVNFSTIVQETGFVTGYIAVLHDVTEQQQVERERRE). Positions 381–599 (NVSHELRTPL…SIFITLPCEV (219 aa)) constitute a Histidine kinase domain. At H384 the chain carries Phosphohistidine; by autocatalysis.

Autophosphorylated.

It is found in the cell membrane. The enzyme catalyses ATP + protein L-histidine = ADP + protein N-phospho-L-histidine.. Functionally, member of the two-component regulatory system WalK/WalR. WalK functions as a sensor protein kinase which is autophosphorylated at a histidine residue and transfers its phosphate group to WalR. This is Sensor protein kinase WalK (walK) from Staphylococcus haemolyticus (strain JCSC1435).